The chain runs to 716 residues: Translation initiation factor IF-2 (716 aa).

Positions 52–135 (QQESNNNTKQ…PAAEPKEMPS (84 aa)) are disordered. Positions 56 to 125 (NNNTKQNTQN…KNNKGNKNNK (70 aa)) are enriched in low complexity. The region spanning 218–387 (ERPAVVTIMG…GLVAEVQELK (170 aa)) is the tr-type G domain. The interval 227–234 (GHVDHGKT) is G1. 227 to 234 (GHVDHGKT) serves as a coordination point for GTP. Residues 252–256 (GITQH) form a G2 region. A G3 region spans residues 273 to 276 (DTPG). GTP is bound by residues 273–277 (DTPGH) and 327–330 (NKID). The G4 stretch occupies residues 327–330 (NKID). Residues 363–365 (SAL) form a G5 region.

The protein belongs to the TRAFAC class translation factor GTPase superfamily. Classic translation factor GTPase family. IF-2 subfamily.

It localises to the cytoplasm. One of the essential components for the initiation of protein synthesis. Protects formylmethionyl-tRNA from spontaneous hydrolysis and promotes its binding to the 30S ribosomal subunits. Also involved in the hydrolysis of GTP during the formation of the 70S ribosomal complex. The sequence is that of Translation initiation factor IF-2 from Staphylococcus haemolyticus (strain JCSC1435).